Here is a 190-residue protein sequence, read N- to C-terminus: Putative transcription factor ovo-like protein 3 (190 aa).

2 disordered regions span residues 1–21 (MPRA…GHLP) and 35–65 (SLGG…SAPR). Positions 41-62 (AQQSSSVRDPWTAQPTQGNLTS) are enriched in polar residues. 4 C2H2-type zinc fingers span residues 70–92 (LGCP…LKCH), 98–120 (HLCR…MRTH), 126–149 (FRCS…AKVH), and 165–187 (HVCE…RALH).

The protein belongs to the krueppel C2H2-type zinc-finger protein family.

It localises to the nucleus. May act as a transcription regulator. The sequence is that of Putative transcription factor ovo-like protein 3 (OVOL3) from Homo sapiens (Human).